The chain runs to 488 residues: Glutamyl-tRNA(Gln) amidotransferase subunit A (488 aa).

Catalysis depends on charge relay system residues K77 and S152. S176 serves as the catalytic Acyl-ester intermediate.

Belongs to the amidase family. GatA subfamily. In terms of assembly, heterotrimer of A, B and C subunits.

The catalysed reaction is L-glutamyl-tRNA(Gln) + L-glutamine + ATP + H2O = L-glutaminyl-tRNA(Gln) + L-glutamate + ADP + phosphate + H(+). Allows the formation of correctly charged Gln-tRNA(Gln) through the transamidation of misacylated Glu-tRNA(Gln) in organisms which lack glutaminyl-tRNA synthetase. The reaction takes place in the presence of glutamine and ATP through an activated gamma-phospho-Glu-tRNA(Gln). The polypeptide is Glutamyl-tRNA(Gln) amidotransferase subunit A (Streptococcus pyogenes serotype M6 (strain ATCC BAA-946 / MGAS10394)).